The sequence spans 333 residues: Uroporphyrinogen decarboxylase (333 aa).

Residues 22–26 (RQAGR), D71, Y145, S200, and H310 contribute to the substrate site.

The protein belongs to the uroporphyrinogen decarboxylase family. In terms of assembly, homodimer.

Its subcellular location is the cytoplasm. The catalysed reaction is uroporphyrinogen III + 4 H(+) = coproporphyrinogen III + 4 CO2. The protein operates within porphyrin-containing compound metabolism; protoporphyrin-IX biosynthesis; coproporphyrinogen-III from 5-aminolevulinate: step 4/4. Its function is as follows. Catalyzes the decarboxylation of four acetate groups of uroporphyrinogen-III to yield coproporphyrinogen-III. This is Uroporphyrinogen decarboxylase from Thermoplasma acidophilum (strain ATCC 25905 / DSM 1728 / JCM 9062 / NBRC 15155 / AMRC-C165).